A 487-amino-acid polypeptide reads, in one-letter code: GTPase Der (487 aa).

2 EngA-type G domains span residues 3–167 (LTLA…DEME) and 203–378 (LQVA…EVWN). GTP contacts are provided by residues 9 to 16 (GRPNVGKS), 56 to 60 (DTAGL), and 119 to 122 (NKAE). Residues 167–190 (EQQAEEQAPETDVDLDPEDEDGEE) show a composition bias toward acidic residues. The tract at residues 167-191 (EQQAEEQAPETDVDLDPEDEDGEEV) is disordered. Residues 209-216 (GRPNAGKS), 256-260 (DTAGM), and 321-324 (NKWD) each bind GTP. The 87-residue stretch at 379-465 (RRIPTAALNR…RLTLRGQGDK (87 aa)) folds into the KH-like domain. The segment at 458–487 (TLRGQGDKNPYKGRRKKNAGALAKHLKSRG) is disordered. Over residues 468-487 (YKGRRKKNAGALAKHLKSRG) the composition is skewed to basic residues.

This sequence belongs to the TRAFAC class TrmE-Era-EngA-EngB-Septin-like GTPase superfamily. EngA (Der) GTPase family. As to quaternary structure, associates with the 50S ribosomal subunit.

Functionally, GTPase that plays an essential role in the late steps of ribosome biogenesis. The sequence is that of GTPase Der from Ruegeria pomeroyi (strain ATCC 700808 / DSM 15171 / DSS-3) (Silicibacter pomeroyi).